Here is a 105-residue protein sequence, read N- to C-terminus: Small ribosomal subunit protein uS10 (105 aa).

It belongs to the universal ribosomal protein uS10 family. Part of the 30S ribosomal subunit.

In terms of biological role, involved in the binding of tRNA to the ribosomes. This chain is Small ribosomal subunit protein uS10, found in Arthrospira platensis (Spirulina platensis).